Reading from the N-terminus, the 279-residue chain is NAD-dependent protein deacylase (279 aa).

In terms of domain architecture, Deacetylase sirtuin-type spans 20 to 272 (RERLRQRIFF…PEFVEKLLKG (253 aa)). Residue 48 to 67 (GAGISAESGIRTFRAADGLW) coordinates NAD(+). Substrate contacts are provided by Y92 and R95. Residue 129–132 (QNID) participates in NAD(+) binding. Catalysis depends on H147, which acts as the Proton acceptor. Residues C155 and C174 each contribute to the Zn(2+) site. Residues 214-216 (GTS), 240-242 (NLE), and A258 each bind NAD(+).

It belongs to the sirtuin family. Class III subfamily. As to quaternary structure, forms a 1:1 complex with acetyl-CoA synthetase (Acs). The cofactor is Zn(2+).

It is found in the cytoplasm. The catalysed reaction is N(6)-acetyl-L-lysyl-[protein] + NAD(+) + H2O = 2''-O-acetyl-ADP-D-ribose + nicotinamide + L-lysyl-[protein]. It catalyses the reaction N(6)-succinyl-L-lysyl-[protein] + NAD(+) + H2O = 2''-O-succinyl-ADP-D-ribose + nicotinamide + L-lysyl-[protein]. It carries out the reaction N(6)-(2-hydroxyisobutanoyl)-L-lysyl-[protein] + NAD(+) + H2O = 2''-O-(2-hydroxyisobutanoyl)-ADP-D-ribose + nicotinamide + L-lysyl-[protein]. With respect to regulation, deacetylation is inhibited by nicotinamide. Functionally, NAD-dependent lysine deacetylase that specifically removes acetyl groups on target proteins. Also acts as a protein-lysine deacylase by mediating protein desuccinylation and de-2-hydroxyisobutyrylation. Modulates the activities of several proteins which are inactive in their acylated form. Activates the enzyme acetyl-CoA synthetase (acs) by deacetylating 'Lys-609' in the inactive, acetylated form of the enzyme. May also modulate the activity of other propionyl-adenosine monophosphate (AMP)-forming enzymes. This Escherichia coli (strain K12) protein is NAD-dependent protein deacylase.